The chain runs to 200 residues: 3-isopropylmalate dehydratase small subunit (200 aa).

It belongs to the LeuD family. LeuD type 1 subfamily. Heterodimer of LeuC and LeuD.

It catalyses the reaction (2R,3S)-3-isopropylmalate = (2S)-2-isopropylmalate. It participates in amino-acid biosynthesis; L-leucine biosynthesis; L-leucine from 3-methyl-2-oxobutanoate: step 2/4. In terms of biological role, catalyzes the isomerization between 2-isopropylmalate and 3-isopropylmalate, via the formation of 2-isopropylmaleate. The chain is 3-isopropylmalate dehydratase small subunit from Haemophilus influenzae (strain PittEE).